The following is a 573-amino-acid chain: Adenine deaminase 2 (573 aa).

Belongs to the metallo-dependent hydrolases superfamily. Adenine deaminase family. Requires Mn(2+) as cofactor.

The catalysed reaction is adenine + H2O + H(+) = hypoxanthine + NH4(+). This chain is Adenine deaminase 2, found in Shouchella clausii (strain KSM-K16) (Alkalihalobacillus clausii).